Reading from the N-terminus, the 690-residue chain is UvrABC system protein B (690 aa).

In terms of domain architecture, Helicase ATP-binding spans Gln30 to Arg188. Position 43–50 (Gly43–Thr50) interacts with ATP. The Beta-hairpin motif lies at Tyr96–Ile119. The Helicase C-terminal domain maps to Gln435–Leu601. The 36-residue stretch at Tyr641–Ala676 folds into the UVR domain.

This sequence belongs to the UvrB family. Forms a heterotetramer with UvrA during the search for lesions. Interacts with UvrC in an incision complex.

The protein resides in the cytoplasm. Functionally, the UvrABC repair system catalyzes the recognition and processing of DNA lesions. A damage recognition complex composed of 2 UvrA and 2 UvrB subunits scans DNA for abnormalities. Upon binding of the UvrA(2)B(2) complex to a putative damaged site, the DNA wraps around one UvrB monomer. DNA wrap is dependent on ATP binding by UvrB and probably causes local melting of the DNA helix, facilitating insertion of UvrB beta-hairpin between the DNA strands. Then UvrB probes one DNA strand for the presence of a lesion. If a lesion is found the UvrA subunits dissociate and the UvrB-DNA preincision complex is formed. This complex is subsequently bound by UvrC and the second UvrB is released. If no lesion is found, the DNA wraps around the other UvrB subunit that will check the other stand for damage. The chain is UvrABC system protein B from Chlorobium phaeobacteroides (strain BS1).